The sequence spans 262 residues: Small ribosomal subunit protein uS3 (262 aa).

The KH type-2 domain occupies 38-106; the sequence is LRKIIAKELE…KVKLNIQEIH (69 aa). The tract at residues 211 to 262 is disordered; the sequence is KGQTQLPQPAVAAARPGLTVEEEERPQRKGGRGGRGANAGAARGGRGGRSRS. Over residues 243 to 255 the composition is skewed to gly residues; the sequence is GGRGANAGAARGG.

Belongs to the universal ribosomal protein uS3 family. As to quaternary structure, part of the 30S ribosomal subunit. Forms a tight complex with proteins S10 and S14.

Functionally, binds the lower part of the 30S subunit head. Binds mRNA in the 70S ribosome, positioning it for translation. This chain is Small ribosomal subunit protein uS3, found in Roseiflexus sp. (strain RS-1).